We begin with the raw amino-acid sequence, 218 residues long: Elongation factor Ts (218 aa).

The involved in Mg(2+) ion dislocation from EF-Tu stretch occupies residues 82–85 (TDFV).

It belongs to the EF-Ts family.

It is found in the cytoplasm. Associates with the EF-Tu.GDP complex and induces the exchange of GDP to GTP. It remains bound to the aminoacyl-tRNA.EF-Tu.GTP complex up to the GTP hydrolysis stage on the ribosome. The polypeptide is Elongation factor Ts (Prochlorococcus marinus (strain MIT 9211)).